The primary structure comprises 294 residues: 4-hydroxy-tetrahydrodipicolinate synthase (294 aa).

Threonine 49 is a binding site for pyruvate. Tyrosine 136 acts as the Proton donor/acceptor in catalysis. Lysine 164 functions as the Schiff-base intermediate with substrate in the catalytic mechanism. Isoleucine 207 is a pyruvate binding site.

This sequence belongs to the DapA family. As to quaternary structure, homotetramer; dimer of dimers.

It is found in the cytoplasm. The catalysed reaction is L-aspartate 4-semialdehyde + pyruvate = (2S,4S)-4-hydroxy-2,3,4,5-tetrahydrodipicolinate + H2O + H(+). It functions in the pathway amino-acid biosynthesis; L-lysine biosynthesis via DAP pathway; (S)-tetrahydrodipicolinate from L-aspartate: step 3/4. Its function is as follows. Catalyzes the condensation of (S)-aspartate-beta-semialdehyde [(S)-ASA] and pyruvate to 4-hydroxy-tetrahydrodipicolinate (HTPA). This Natronomonas pharaonis (strain ATCC 35678 / DSM 2160 / CIP 103997 / JCM 8858 / NBRC 14720 / NCIMB 2260 / Gabara) (Halobacterium pharaonis) protein is 4-hydroxy-tetrahydrodipicolinate synthase.